The sequence spans 92 residues: Small ribosomal subunit protein uS19 (92 aa).

The protein belongs to the universal ribosomal protein uS19 family.

Its function is as follows. Protein S19 forms a complex with S13 that binds strongly to the 16S ribosomal RNA. The chain is Small ribosomal subunit protein uS19 from Picosynechococcus sp. (strain ATCC 27264 / PCC 7002 / PR-6) (Agmenellum quadruplicatum).